Here is a 103-residue protein sequence, read N- to C-terminus: Large ribosomal subunit protein bL21 (103 aa).

It belongs to the bacterial ribosomal protein bL21 family. As to quaternary structure, part of the 50S ribosomal subunit. Contacts protein L20.

In terms of biological role, this protein binds to 23S rRNA in the presence of protein L20. In Psychromonas ingrahamii (strain DSM 17664 / CCUG 51855 / 37), this protein is Large ribosomal subunit protein bL21.